A 642-amino-acid chain; its full sequence is Threonine--tRNA ligase (642 aa).

The region spanning 1-61 (MPVITLPDGS…DTDAQLAIIT (61 aa)) is the TGS domain. Positions 243 to 534 (DHRKIGKQLD…LTEEFAGFFP (292 aa)) are catalytic. Residues C334, H385, and H511 each contribute to the Zn(2+) site.

Belongs to the class-II aminoacyl-tRNA synthetase family. As to quaternary structure, homodimer. The cofactor is Zn(2+).

The protein localises to the cytoplasm. It carries out the reaction tRNA(Thr) + L-threonine + ATP = L-threonyl-tRNA(Thr) + AMP + diphosphate + H(+). In terms of biological role, catalyzes the attachment of threonine to tRNA(Thr) in a two-step reaction: L-threonine is first activated by ATP to form Thr-AMP and then transferred to the acceptor end of tRNA(Thr). Also edits incorrectly charged L-seryl-tRNA(Thr). In Pectobacterium carotovorum subsp. carotovorum (strain PC1), this protein is Threonine--tRNA ligase.